The chain runs to 349 residues: Dihydroorotate dehydrogenase (quinone) (349 aa).

FMN is bound by residues 67–71 (AGLDK) and Thr91. Lys71 serves as a coordination point for substrate. 116–120 (NRLGF) is a substrate binding site. FMN-binding residues include Asn147 and Asn180. Residue Asn180 participates in substrate binding. The Nucleophile role is filled by Ser183. Asn185 lines the substrate pocket. Residues Lys225 and Thr253 each coordinate FMN. 254–255 (NT) serves as a coordination point for substrate. FMN is bound by residues Gly276, Gly305, and 326 to 327 (YT).

Belongs to the dihydroorotate dehydrogenase family. Type 2 subfamily. Monomer. Requires FMN as cofactor.

The protein resides in the cell membrane. It carries out the reaction (S)-dihydroorotate + a quinone = orotate + a quinol. Its pathway is pyrimidine metabolism; UMP biosynthesis via de novo pathway; orotate from (S)-dihydroorotate (quinone route): step 1/1. Its function is as follows. Catalyzes the conversion of dihydroorotate to orotate with quinone as electron acceptor. This chain is Dihydroorotate dehydrogenase (quinone), found in Bordetella parapertussis (strain 12822 / ATCC BAA-587 / NCTC 13253).